The primary structure comprises 1041 residues: Putative transcription elongation factor SPT5 homolog 1 (1041 aa).

Residues 1–133 form a disordered region; sequence MPRSRDEDDE…ERGDRRYERR (133 aa). Composition is skewed to acidic residues over residues 7 to 32, 53 to 69, and 99 to 114; these read EDDELDGDYEALDLEEEEEEDEEEEE, DYAEEDSQEEDDDDEDY, and DDEDEEEEDEAEDDFI. Position 59 is a phosphoserine (Ser59). The span at 122 to 133 shows a compositional bias: basic and acidic residues; the sequence is PDERGDRRYERR. KOW domains lie at 273-300, 425-452, 477-504, and 601-628; these read DLSRDTWVRMKIGTYKGDLAKVVDVDNV, HFMKGDAVIVIKGDLKNLKGWVEKVDEE, YFEPGNHVKVVSGTHEGATGMVVKVDQH, and VIAVKDDVRVIEGPSKGKQGPVKHIYKG. 2 disordered regions span residues 662 to 713 and 768 to 921; these read NRNG…GDDS and DTSR…GTGL. Over residues 691 to 703 the composition is skewed to gly residues; that stretch reads GRGGGYNNSGGRH. Residues 712-739 enclose the KOW 5 domain; sequence DSLLGTTVKIRLGPFKGYRGPVVEVKGN. Positions 804–814 are enriched in basic and acidic residues; sequence DGMRTPMRDRA. Composition is skewed to polar residues over residues 835–844 and 893–904; these read SWGTSPQYQP and TPGQPMTPSSAS. The KOW 6 domain occupies 988–1015; that stretch reads PPRKSDRVKIVGGQYRGSTGKLIGIDGS.

The protein belongs to the SPT5 family.

It localises to the nucleus. May regulate transcription elongation by RNA polymerase II. May enhance transcriptional pausing at sites proximal to the promoter, which may in turn facilitate the assembly of an elongation competent RNA polymerase II complex. This Arabidopsis thaliana (Mouse-ear cress) protein is Putative transcription elongation factor SPT5 homolog 1.